We begin with the raw amino-acid sequence, 307 residues long: Methionyl-tRNA formyltransferase (307 aa).

108–111 provides a ligand contact to (6S)-5,6,7,8-tetrahydrofolate; that stretch reads SLLP.

Belongs to the Fmt family.

It catalyses the reaction L-methionyl-tRNA(fMet) + (6R)-10-formyltetrahydrofolate = N-formyl-L-methionyl-tRNA(fMet) + (6S)-5,6,7,8-tetrahydrofolate + H(+). Functionally, attaches a formyl group to the free amino group of methionyl-tRNA(fMet). The formyl group appears to play a dual role in the initiator identity of N-formylmethionyl-tRNA by promoting its recognition by IF2 and preventing the misappropriation of this tRNA by the elongation apparatus. This Stenotrophomonas maltophilia (strain R551-3) protein is Methionyl-tRNA formyltransferase.